Here is a 541-residue protein sequence, read N- to C-terminus: Chaperonin GroEL 2 (541 aa).

ATP-binding positions include 29–32 (TLGP), 86–90 (DGTTT), Gly-414, 478–480 (DAA), and Asp-494.

This sequence belongs to the chaperonin (HSP60) family. Forms a cylinder of 14 subunits composed of two heptameric rings stacked back-to-back. Interacts with the co-chaperonin GroES.

The protein localises to the cytoplasm. The catalysed reaction is ATP + H2O + a folded polypeptide = ADP + phosphate + an unfolded polypeptide.. Its function is as follows. Together with its co-chaperonin GroES, plays an essential role in assisting protein folding. The GroEL-GroES system forms a nano-cage that allows encapsulation of the non-native substrate proteins and provides a physical environment optimized to promote and accelerate protein folding. This Frankia casuarinae (strain DSM 45818 / CECT 9043 / HFP020203 / CcI3) protein is Chaperonin GroEL 2.